Consider the following 350-residue polypeptide: Outer membrane protein A (350 aa).

An N-terminal signal peptide occupies residues 1-21; that stretch reads MKKTAIAIAVALAGFATVAQA. The next 8 beta stranded transmembrane spans lie at 27 to 37, 59 to 70, 74 to 82, 100 to 111, 116 to 124, 146 to 155, 160 to 167, and 186 to 194; these read TWYAGGKLGWS, QLGAGAFGGYQV, LGFEMGYDW, QAVQLTAKLGYP, LDIYTRLGG, PVFAGGVEWA, IATRLEYQ, and MLSVGVSYR. 4 consecutive repeat copies span residues 205–206, 207–208, 209–210, and 211–212. A 4 X 2 AA tandem repeats of A-P region spans residues 205 to 212; the sequence is APAPAPAP. An OmpA-like domain is found at 214–342; the sequence is VTTKTFTLKS…RVAIEVKGYK (129 aa). Cys-315 and Cys-327 are joined by a disulfide.

The protein belongs to the outer membrane OOP (TC 1.B.6) superfamily. OmpA family. Monomer and homodimer.

It localises to the cell outer membrane. With TolR probably plays a role in maintaining the position of the peptidoglycan cell wall in the periplasm. Acts as a porin with low permeability that allows slow penetration of small solutes; an internal gate slows down solute passage. In terms of biological role, required for conjugation with F-type plasmids; probably serves as the mating receptor on recipient cells. In Klebsiella aerogenes (Enterobacter aerogenes), this protein is Outer membrane protein A.